Consider the following 529-residue polypeptide: T-complex protein 1 subunit beta (529 aa).

This sequence belongs to the TCP-1 chaperonin family. As to quaternary structure, heterooligomeric complex of about 850 to 900 kDa that forms two stacked rings, 12 to 16 nm in diameter.

The protein localises to the cytoplasm. In terms of biological role, molecular chaperone; assists the folding of proteins upon ATP hydrolysis. Known to play a role, in vitro, in the folding of actin and tubulin. The polypeptide is T-complex protein 1 subunit beta (cct-2) (Caenorhabditis elegans).